A 578-amino-acid polypeptide reads, in one-letter code: MLLRISVLFLLLGSCGALFGKRQKCEQITIPLCKGIGYNMTSFPNSYGHEKQEEAGLEVHQFYPLVEVGCFQHLKFFLCTMYTPICQENYDKPILPCMELCVEARSKCSPIMAKYGFRWPETLSCEALPKMSDQMSTGNICAAPPDTPKKQHKGHHHKNQNQNQNQNHNYSPDGPEVGISKIDNEVIAGPSECQCTCNQPFQFVASEKSKVGNVTNCAYSCHSPALAESHSLVSNWMAFWSITCCVLASFTFLTFLIETDRFQYPERPIFMLAFCQLMVAVGFMIRYFVGHEEIACDSMRIKGADDNSGSLCFVVFLLTYFFGMAASVWWVILSLTWVLSAASKWSPEAISSFSFHFHVVGWCLPAIQTVLVIVFNAIDGDPITGICYVGNTDLQFQRIFVLFPLLVYFIVGVLFLVIGFCNLWSIRNEVQKQHPSLESAHKITQLMSKIGIFSLLYTIPSLLIICVLFYEQNHRSLWEQSQLCSCSPKQTIGDSSLIISLIKTCCMCILGWTSGFWVCSTKTLSSWKNAICCLGSSRSLPKYQPADILYAKSDMSSSQFYNTSLRHNHLYGGIPDKL.

The first 17 residues, 1–17 (MLLRISVLFLLLGSCGA), serve as a signal peptide directing secretion. Topologically, residues 18–236 (LFGKRQKCEQ…AESHSLVSNW (219 aa)) are extracellular. The 125-residue stretch at 20-144 (GKRQKCEQIT…MSTGNICAAP (125 aa)) folds into the FZ domain. Intrachain disulfides connect cysteine 25–cysteine 86, cysteine 33–cysteine 79, cysteine 70–cysteine 108, cysteine 97–cysteine 141, and cysteine 101–cysteine 125. N-linked (GlcNAc...) asparagine glycosylation occurs at asparagine 39. The tract at residues 138–175 (GNICAAPPDTPKKQHKGHHHKNQNQNQNQNHNYSPDGP) is disordered. The span at 150 to 159 (KQHKGHHHKN) shows a compositional bias: basic residues. The span at 160-169 (QNQNQNQNHN) shows a compositional bias: low complexity. Asparagine 213 carries an N-linked (GlcNAc...) asparagine glycan. A helical transmembrane segment spans residues 237–257 (MAFWSITCCVLASFTFLTFLI). The Cytoplasmic portion of the chain corresponds to 258-268 (ETDRFQYPERP). A helical transmembrane segment spans residues 269-289 (IFMLAFCQLMVAVGFMIRYFV). At 290 to 312 (GHEEIACDSMRIKGADDNSGSLC) the chain is on the extracellular side. The helical transmembrane segment at 313–333 (FVVFLLTYFFGMAASVWWVIL) threads the bilayer. The Cytoplasmic segment spans residues 334 to 354 (SLTWVLSAASKWSPEAISSFS). The helical transmembrane segment at 355 to 375 (FHFHVVGWCLPAIQTVLVIVF) threads the bilayer. Over 376–398 (NAIDGDPITGICYVGNTDLQFQR) the chain is Extracellular. Residues 399–419 (IFVLFPLLVYFIVGVLFLVIG) form a helical membrane-spanning segment. Residues 420–449 (FCNLWSIRNEVQKQHPSLESAHKITQLMSK) are Cytoplasmic-facing. The helical transmembrane segment at 450 to 470 (IGIFSLLYTIPSLLIICVLFY) threads the bilayer. The Extracellular segment spans residues 471–497 (EQNHRSLWEQSQLCSCSPKQTIGDSSL). Residues 498–518 (IISLIKTCCMCILGWTSGFWV) form a helical membrane-spanning segment. Residues 519-578 (CSTKTLSSWKNAICCLGSSRSLPKYQPADILYAKSDMSSSQFYNTSLRHNHLYGGIPDKL) are Cytoplasmic-facing. A Lys-Thr-X-X-X-Trp motif, mediates interaction with the PDZ domain of Dvl family members motif is present at residues 522–527 (KTLSSW). The short motif at 556-558 (SSS) is the PDZ-binding element.

The protein belongs to the G-protein coupled receptor Fz/Smo family. As to expression, expressed in two pairs of head neurons and throughout the pharynx.

The protein localises to the cell membrane. In terms of biological role, receptor for Wnt proteins. Most frizzled receptors are coupled to the beta-catenin canonical signaling pathway, which leads to the activation of disheveled proteins, inhibition of gsk-3 kinase, nuclear accumulation of beta-catenin and activation of Wnt target genes. A second signaling pathway involving PKC and calcium fluxes has been seen for some family members, but it is not yet clear if it represents a distinct pathway or if it can be integrated in the canonical pathway, as PKC seems to be required for Wnt-mediated inactivation of gsk-3 kinase. Both pathways seem to involve interactions with G-proteins. Required for the migration and axon formation and guidance of different neuronal cell types including canal-associated neurons (CAN), hermaphrodite-specific neurons (HSN), anterior lateral microtubule neurons (ALM), and the right Q neuroblast (QR) and its descendants. Directs ALM migration through frizzled protein mom-5 and Wnt ligands cwn-1, cwn-2 and egl-20. May act redundantly with mom-5 to direct CAN migration. Plays a role in the organization of head ganglion cells. Probably by acting as a receptor for Wnt ligand cwn-2, plays a role in the positioning of the nerve ring and may in addition positively regulate the neurite outgrowth of RME GABAergic motor neurons along the anterior-posterior axis of the body. The protein is Frizzled-2 of Caenorhabditis elegans.